The following is a 223-amino-acid chain: Endonuclease V (223 aa).

The Mg(2+) site is built by aspartate 35 and aspartate 103.

The protein belongs to the endonuclease V family. Requires Mg(2+) as cofactor.

The protein localises to the cytoplasm. The catalysed reaction is Endonucleolytic cleavage at apurinic or apyrimidinic sites to products with a 5'-phosphate.. Functionally, DNA repair enzyme involved in the repair of deaminated bases. Selectively cleaves double-stranded DNA at the second phosphodiester bond 3' to a deoxyinosine leaving behind the intact lesion on the nicked DNA. This is Endonuclease V from Shigella flexneri serotype 5b (strain 8401).